Consider the following 149-residue polypeptide: Large ribosomal subunit protein bL9 (149 aa).

Belongs to the bacterial ribosomal protein bL9 family.

Its function is as follows. Binds to the 23S rRNA. This is Large ribosomal subunit protein bL9 from Alkaliphilus metalliredigens (strain QYMF).